The following is a 140-amino-acid chain: Large ribosomal subunit protein bL21 (140 aa).

Residues 106 to 140 (SGVKPAVGARTKIEPAVKPAKAKKSEAEASAEDAN) form a disordered region.

Belongs to the bacterial ribosomal protein bL21 family. Part of the 50S ribosomal subunit. Contacts protein L20.

Its function is as follows. This protein binds to 23S rRNA in the presence of protein L20. The protein is Large ribosomal subunit protein bL21 of Paracoccus denitrificans (strain Pd 1222).